The sequence spans 755 residues: Proprotein convertase subtilisin/kexin type 4 (755 aa).

An N-terminal signal peptide occupies residues 1–25; that stretch reads MRPAPIALWLRLVLALALVRPRAVG. The propeptide occupies 26–113; that stretch reads WAPVRAPIYV…QQTLQRRVKR (88 aa). A Peptidase S8 domain is found at 126 to 440; the sequence is QWYMNSEAQP…YGLLDAGLLV (315 aa). Catalysis depends on charge relay system residues Asp158, His199, and Ser373. One can recognise a P/Homo B domain in the interval 449–581; the sequence is TQPQRKCAVR…TLLLYGTAED (133 aa). Residues Asn475 and Asn629 are each glycosylated (N-linked (GlcNAc...) asparagine). A helical membrane pass occupies residues 709–729; sequence AMVLSLLAVTLGGPVLCGMSM.

This sequence belongs to the peptidase S8 family. Furin subfamily. As to quaternary structure, the proPCSK4 form interacts with HSPA5; the interaction takes place at the endoplasmic reticulum. N-glycosylated. In terms of processing, synthesized in the endoplasmic reticulum as a zymogen, is matured by autocatalytic cleavage between the prodomain and the catalytic domain. Placenta.

Its subcellular location is the membrane. It localises to the cytoplasmic vesicle. The protein localises to the secretory vesicle. It is found in the acrosome membrane. Its function is as follows. Proprotein convertase involved in the processing of hormone and other protein precursors at sites comprised of pairs of basic amino acid residues. In males, important for ADAM2 processing as well as other acrosomal proteins with roles in fertilization and critical for normal fertilization events such as sperm capacitation, acrosome reaction and binding of sperm to zona pellucida. Also plays a role in female fertility, involved in the regulation of trophoblast migration and placental development, may be through the proteolytical processing and activation of proteins such as IGF2. May also participate in folliculogenesis in the ovaries. The chain is Proprotein convertase subtilisin/kexin type 4 from Homo sapiens (Human).